A 167-amino-acid chain; its full sequence is Crossover junction endodeoxyribonuclease RuvC (167 aa).

Residues Asp-7, Glu-67, and Asp-139 contribute to the active site. 3 residues coordinate Mg(2+): Asp-7, Glu-67, and Asp-139.

This sequence belongs to the RuvC family. As to quaternary structure, homodimer which binds Holliday junction (HJ) DNA. The HJ becomes 2-fold symmetrical on binding to RuvC with unstacked arms; it has a different conformation from HJ DNA in complex with RuvA. In the full resolvosome a probable DNA-RuvA(4)-RuvB(12)-RuvC(2) complex forms which resolves the HJ. Requires Mg(2+) as cofactor.

It is found in the cytoplasm. It carries out the reaction Endonucleolytic cleavage at a junction such as a reciprocal single-stranded crossover between two homologous DNA duplexes (Holliday junction).. Functionally, the RuvA-RuvB-RuvC complex processes Holliday junction (HJ) DNA during genetic recombination and DNA repair. Endonuclease that resolves HJ intermediates. Cleaves cruciform DNA by making single-stranded nicks across the HJ at symmetrical positions within the homologous arms, yielding a 5'-phosphate and a 3'-hydroxyl group; requires a central core of homology in the junction. The consensus cleavage sequence is 5'-(A/T)TT(C/G)-3'. Cleavage occurs on the 3'-side of the TT dinucleotide at the point of strand exchange. HJ branch migration catalyzed by RuvA-RuvB allows RuvC to scan DNA until it finds its consensus sequence, where it cleaves and resolves the cruciform DNA. In Akkermansia muciniphila (strain ATCC BAA-835 / DSM 22959 / JCM 33894 / BCRC 81048 / CCUG 64013 / CIP 107961 / Muc), this protein is Crossover junction endodeoxyribonuclease RuvC.